Here is a 548-residue protein sequence, read N- to C-terminus: MAAKDEKFGNEARIKMLRGVNVLADAVKVTLGPKGRNVVLDKSFGAPSITKDGVSVAREIELEDKFENMGAQMVKEVASKANDAAGDGTTTATLLAQSIVNEGLKAVAAGMNPMDLKRGIDKAVISAVEELKNLSVPCSDSKAITQVGTISANADEKVGALIAEAMEKVGNDGVITVEEGTGLQNELEVVKGMQFDRGYLSPYFINKPETGVVELENPYILMADKKISNVREMLPILESVAKSGKPLLIISEDLEGEALATLVVNSMRGIVKVAAVKAPGFGDRRKAMLQDISVLTGGSVISEELAMDLEKSTLEDLGQAKRVVINKDTTTIIGGVGEKQAIQSRISQIRQEIQEATSDYDKEKLNERLAKLSGGVAVLKVGAATEVEMKEKKARVEDALHATRAAVEEGVVAGGGVALVRVAGKISNLRGHNEDQNVGIRVALRAMEAPLRQIVSNSGEEPSVVTNNVKDGKGNYGYNAATDEYGDMIDFGILDPTKVTRSALQYAASVAGLMITTECMVTDLPKEDKTSDASSSPAGGMGGMGGMM.

Residues 30 to 33 (TLGP), K51, 87 to 91 (DGTTT), G415, 479 to 481 (NAA), and D495 contribute to the ATP site. The disordered stretch occupies residues 525 to 548 (PKEDKTSDASSSPAGGMGGMGGMM). A compositionally biased stretch (gly residues) spans 539 to 548 (GGMGGMGGMM).

It belongs to the chaperonin (HSP60) family. As to quaternary structure, forms a cylinder of 14 subunits composed of two heptameric rings stacked back-to-back. Interacts with the co-chaperonin GroES.

The protein resides in the cytoplasm. It catalyses the reaction ATP + H2O + a folded polypeptide = ADP + phosphate + an unfolded polypeptide.. In terms of biological role, together with its co-chaperonin GroES, plays an essential role in assisting protein folding. The GroEL-GroES system forms a nano-cage that allows encapsulation of the non-native substrate proteins and provides a physical environment optimized to promote and accelerate protein folding. The chain is Chaperonin GroEL from Buchnera aphidicola subsp. Rhopalosiphum maidis.